The primary structure comprises 133 residues: U-scoloptoxin(05)-Sa1a (133 aa).

The N-terminal stretch at 1 to 24 (MPSLCIIALFGTLTFYTLIPSIHT) is a signal peptide.

This sequence belongs to the scoloptoxin-05 family. Contains 5 disulfide bonds. In terms of tissue distribution, expressed by the venom gland.

The protein resides in the secreted. The chain is U-scoloptoxin(05)-Sa1a from Scolopendra alternans (Florida Keys giant centipede).